The primary structure comprises 184 residues: MVPMGLTVLSGPSGVGKDTVVAAVRERHPEVWVSVSATTRPPRPGETDGVEYHFVDAEEFARMVKAGEFVEHAMFAGHAYGTPRRPLLERLAAGVPCLLEIELLGARQVRSAMPQARFVFLAPPTFDELVRRLTGRGTESPEVIARRLDRARIELAAETEFDDVIVNDDVRSAAARLVALMIGS.

The 179-residue stretch at 4–182 folds into the Guanylate kinase-like domain; sequence MGLTVLSGPS…AAARLVALMI (179 aa). 11-18 serves as a coordination point for ATP; it reads GPSGVGKD.

It belongs to the guanylate kinase family.

It localises to the cytoplasm. It catalyses the reaction GMP + ATP = GDP + ADP. Its function is as follows. Essential for recycling GMP and indirectly, cGMP. In Frankia casuarinae (strain DSM 45818 / CECT 9043 / HFP020203 / CcI3), this protein is Guanylate kinase.